Reading from the N-terminus, the 795-residue chain is ATP-dependent RNA helicase DHX15 (795 aa).

The tract at residues 1 to 108 is disordered; that stretch reads MSKRHRLDLG…HSTHAGHAGH (108 aa). Ser-15 carries the phosphoserine modification. Residues 20-62 show a composition bias toward basic and acidic residues; sequence AGTDGKDRDRDRDREDRSKDRDRERDRGDREREREKEKEKELR. The span at 79–108 shows a compositional bias: low complexity; sequence ASHSAHSTHSAHSTHSTHSAHSTHAGHAGH. The region spanning 147-313 is the Helicase ATP-binding domain; that stretch reads TDILVRHQSF…FDNCPLLTIP (167 aa). Residue 160 to 167 coordinates ATP; that stretch reads GETGSGKT. A DEAH box motif is present at residues 260-263; the sequence is DEAH. One can recognise a Helicase C-terminal domain in the interval 338-518; the sequence is TVIQIHMCEE…SVVLQLKKLG (181 aa). At Lys-488 the chain carries N6-acetyllysine. Lys-786 is covalently cross-linked (Glycyl lysine isopeptide (Lys-Gly) (interchain with G-Cter in SUMO2)).

It belongs to the DEAD box helicase family. DEAH subfamily. DDX15/PRP43 sub-subfamily. In terms of assembly, component of the U11/U12 snRNPs that are part of the U12-type spliceosome. Identified in the Intron Large spliceosome complex (IL, also named intron lariat spliceosome), a post-mRNA release spliceosomal complex containing the excised intron, U2, U5 and U6 snRNPs, and splicing factors; the association may be transient. The IL complex exists in two distinct conformations, one with the DHX15 (ILS2) and one without (ILS1). Interacts with TFIP11 (via G-patch domain); indicative for a recruitment to the IL complex. Interacts with SSB/La. Interacts with GPATCH2 (via G-patch domain); promoting the RNA helicase activity. Interacts with NKRF (via G-patch domain); promoting the RNA helicase activity. Interacts with NLRP6. In terms of tissue distribution, ubiquitous.

It localises to the nucleus. The protein localises to the nucleolus. The catalysed reaction is ATP + H2O = ADP + phosphate + H(+). Its activity is regulated as follows. ATPase activity is enhanced upon binding to G-patch domain-containing proteins. G-patch domain-containing proteins act like a brace that tethers mobile sections of DHX15 together, stabilizing a functional conformation with high RNA affinity, thereby promoting the ATPase activity. Its function is as follows. RNA helicase involved in mRNA processing and antiviral innate immunity. Pre-mRNA processing factor involved in disassembly of spliceosomes after the release of mature mRNA. In cooperation with TFIP11 seem to be involved in the transition of the U2, U5 and U6 snRNP-containing IL complex to the snRNP-free IS complex leading to efficient debranching and turnover of excised introns. Plays a key role in antiviral innate immunity by promoting both MAVS-dependent signaling and NLRP6 inflammasome. Acts as an RNA virus sensor: recognizes and binds viral double stranded RNA (dsRNA) and activates the MAVS-dependent signaling to produce interferon-beta and interferon lambda-3 (IFNL3). Involved in intestinal antiviral innate immunity together with NLRP6: recognizes and binds viral dsRNA and promotes activation of the NLRP6 inflammasome in intestinal epithelial cells to restrict infection by enteric viruses. The NLRP6 inflammasome acts by promoting maturation and secretion of IL18 in the extracellular milieu. Also involved in antibacterial innate immunity by promoting Wnt-induced antimicrobial protein expression in Paneth cells. The chain is ATP-dependent RNA helicase DHX15 from Homo sapiens (Human).